A 249-amino-acid polypeptide reads, in one-letter code: Probable cobalt-factor III C(17)-methyltransferase (249 aa).

This sequence belongs to the precorrin methyltransferase family.

The enzyme catalyses Co(II)-factor III + S-adenosyl-L-methionine + H(+) = Co(II)-factor IV + S-adenosyl-L-homocysteine. It participates in cofactor biosynthesis; adenosylcobalamin biosynthesis; cob(II)yrinate a,c-diamide from sirohydrochlorin (anaerobic route): step 3/10. In terms of biological role, methyltransferase that likely catalyzes the ring contraction and methylation of C-17 in cobalt-factor III to form cobalt-factor IV. May also convert cobalt-precorrin-3 to cobalt-precorrin-4. This Methanocaldococcus jannaschii (strain ATCC 43067 / DSM 2661 / JAL-1 / JCM 10045 / NBRC 100440) (Methanococcus jannaschii) protein is Probable cobalt-factor III C(17)-methyltransferase (cbiH).